The sequence spans 533 residues: Protein mono-ADP-ribosyltransferase PARP3 (533 aa).

A disordered region spans residues 1 to 30 (MAPKRKASVQTEGSKKRRQGTEEEDSFRST). The residue at position 6 (lysine 6) is an N6-(ADP-ribosyl)lysine. Glutamate 12 bears the ADP-ribosyl glutamic acid mark. The Nuclear localization signal motif lies at 14–18 (SKKRR). ADP-ribosyl glutamic acid occurs at positions 24 and 32. A WGR domain is found at 57 to 147 (GIQVHEDYDC…DRFVAQPNKY (91 aa)). Aspartate 138 carries the ADP-ribosyl aspartic acid modification. ADP-ribosyl glutamic acid occurs at positions 160, 230, 309, and 310. One can recognise a PARP alpha-helical domain in the interval 181–299 (PCSLDPATQN…DIELAQTLQA (119 aa)). One can recognise a PARP catalytic domain in the interval 313-533 (HPLDRDYQLL…RLRYLLEIHL (221 aa)).

Belongs to the ARTD/PARP family. Interacts with PARP1; leading to activate PARP1 in absence of DNA. Interacts with PRKDC. Interacts with XRCC5/Ku80; the interaction is dependent on nucleic acids. Interacts with XRCC6/Ku70; the interaction is dependent on nucleic acids. Interacts with EZH2, HDAC1, HDAC2, SUZ12, YY1, LRIG3 and LIG4. Post-translationally, auto-ADP-ribosylated.

The protein localises to the nucleus. It localises to the chromosome. Its subcellular location is the cytoplasm. The protein resides in the cytoskeleton. It is found in the microtubule organizing center. The protein localises to the centrosome. It localises to the centriole. The enzyme catalyses L-aspartyl-[protein] + NAD(+) = 4-O-(ADP-D-ribosyl)-L-aspartyl-[protein] + nicotinamide. It carries out the reaction L-glutamyl-[protein] + NAD(+) = 5-O-(ADP-D-ribosyl)-L-glutamyl-[protein] + nicotinamide. The catalysed reaction is L-lysyl-[protein] + NAD(+) = N(6)-(ADP-D-ribosyl)-L-lysyl-[protein] + nicotinamide + H(+). Functionally, mono-ADP-ribosyltransferase that mediates mono-ADP-ribosylation of target proteins and plays a key role in the response to DNA damage. Mediates mono-ADP-ribosylation of glutamate, aspartate or lysine residues on target proteins. In contrast to PARP1 and PARP2, it is not able to mediate poly-ADP-ribosylation. Involved in DNA repair by mediating mono-ADP-ribosylation of a limited number of acceptor proteins involved in chromatin architecture and in DNA metabolism, such as histone H2B, XRCC5 and XRCC6. ADP-ribosylation follows DNA damage and appears as an obligatory step in a detection/signaling pathway leading to the reparation of DNA strand breaks. Involved in single-strand break repair by catalyzing mono-ADP-ribosylation of histone H2B on 'Glu-2' (H2BE2ADPr) of nucleosomes containing nicked DNA. Cooperates with the XRCC5-XRCC6 (Ku80-Ku70) heterodimer to limit end-resection thereby promoting accurate NHEJ. Suppresses G-quadruplex (G4) structures in response to DNA damage. Associates with a number of DNA repair factors and is involved in the response to exogenous and endogenous DNA strand breaks. Together with APLF, promotes the retention of the LIG4-XRCC4 complex on chromatin and accelerate DNA ligation during non-homologous end-joining (NHEJ). May link the DNA damage surveillance network to the mitotic fidelity checkpoint. Acts as a negative regulator of immunoglobulin class switch recombination, probably by controlling the level of AICDA /AID on the chromatin. In addition to proteins, also able to ADP-ribosylate DNA: mediates DNA mono-ADP-ribosylation of DNA strand break termini via covalent addition of a single ADP-ribose moiety to a 5'- or 3'-terminal phosphate residues in DNA containing multiple strand breaks. The chain is Protein mono-ADP-ribosyltransferase PARP3 from Mus musculus (Mouse).